The following is a 448-amino-acid chain: Ribosomal protein uS12 methylthiotransferase RimO (448 aa).

The 113-residue stretch at 7 to 119 (QSLHLISLGC…IDSMIAQRRS (113 aa)) folds into the MTTase N-terminal domain. [4Fe-4S] cluster is bound by residues C16, C50, C82, C151, C155, and C158. Residues 137-366 (IGSSFHAYIK…NKIIQSQYKA (230 aa)) form the Radical SAM core domain.

It belongs to the methylthiotransferase family. RimO subfamily. It depends on [4Fe-4S] cluster as a cofactor.

It localises to the cytoplasm. It catalyses the reaction L-aspartate(89)-[ribosomal protein uS12]-hydrogen + (sulfur carrier)-SH + AH2 + 2 S-adenosyl-L-methionine = 3-methylsulfanyl-L-aspartate(89)-[ribosomal protein uS12]-hydrogen + (sulfur carrier)-H + 5'-deoxyadenosine + L-methionine + A + S-adenosyl-L-homocysteine + 2 H(+). Functionally, catalyzes the methylthiolation of an aspartic acid residue of ribosomal protein uS12. This Helicobacter hepaticus (strain ATCC 51449 / 3B1) protein is Ribosomal protein uS12 methylthiotransferase RimO.